Consider the following 419-residue polypeptide: NF-kappa-B essential modulator (419 aa).

The segment at 1-197 (MNRHLWKSQL…REALQQQHSV (197 aa)) is required for interaction with and ubiquitination by MARCHF2. Serine 31 and serine 43 each carry phosphoserine; by IKKB. Positions 44–111 (EQGAPETLQR…KLVERLGLEK (68 aa)) are interaction with CHUK/IKBKB. Positions 49–356 (ETLQRCLEEN…CQESARIEDM (308 aa)) form a coiled coil. The residue at position 68 (serine 68) is a Phosphoserine. Serine 85 carries the phosphoserine; by ATM modification. Glycyl lysine isopeptide (Lys-Gly) (interchain with G-Cter in ubiquitin) cross-links involve residues lysine 111, lysine 139, lysine 143, lysine 226, lysine 246, and lysine 264. Positions 150–257 (LGELQESQSR…SVVGSERKRG (108 aa)) are interaction with TANK. The ubiquitin-binding (UBAN) stretch occupies residues 242-350 (DNHIKSSVVG…SKLKASCQES (109 aa)). The tract at residues 246–365 (KSSVVGSERK…MRKRHVEVSQ (120 aa)) is self-association. The tract at residues 251-419 (GSERKRGMQL…LQIHVMECIE (169 aa)) is required for interaction with TNFAIP3. A Glycyl lysine isopeptide (Lys-Gly) (interchain with G-Cter in SUMO); alternate cross-link involves residue lysine 277. Residue lysine 277 forms a Glycyl lysine isopeptide (Lys-Gly) (interchain with G-Cter in ubiquitin); alternate linkage. Glycyl lysine isopeptide (Lys-Gly) (interchain with G-Cter in ubiquitin) cross-links involve residues lysine 283, lysine 285, lysine 292, and lysine 302. Lysine 309 participates in a covalent cross-link: Glycyl lysine isopeptide (Lys-Gly) (interchain with G-Cter in SUMO); alternate. A Glycyl lysine isopeptide (Lys-Gly) (interchain with G-Cter in ubiquitin); alternate cross-link involves residue lysine 309. Glycyl lysine isopeptide (Lys-Gly) (interchain with G-Cter in ubiquitin) cross-links involve residues lysine 321 and lysine 325. Residues 322–343 (LAEKKELLQEQLEQLQREYSKL) form a leucine-zipper region. A Glycyl lysine isopeptide (Lys-Gly) (interchain with G-Cter in ubiquitin and interchain with MARCHF2) cross-link involves residue lysine 326. Residues 358–395 (KRHVEVSQAPLPPAPAYLSSPLALPSQRRSPPEEPPDF) are disordered. The segment covering 373–386 (AYLSSPLALPSQRR) has biased composition (low complexity). Serine 376 is modified (phosphoserine; by IKKB). Positions 382–419 (PSQRRSPPEEPPDFCCPKCQYQAPDMDTLQIHVMECIE) are interaction with CYLD. The residue at position 387 (serine 387) is a Phosphoserine. Residues 389–419 (PEEPPDFCCPKCQYQAPDMDTLQIHVMECIE) form a CCHC NOA-type zinc finger. Cysteine 397 provides a ligand contact to Zn(2+). Lysine 399 is covalently cross-linked (Glycyl lysine isopeptide (Lys-Gly) (interchain with G-Cter in ubiquitin)). Zn(2+) contacts are provided by cysteine 400, histidine 413, and cysteine 417.

In terms of assembly, homodimer; disulfide-linked. Component of the I-kappa-B-kinase (IKK) core complex consisting of CHUK, IKBKB and IKBKG; probably four alpha/CHUK-beta/IKBKB dimers are associated with four gamma/IKBKG subunits. The IKK core complex seems to associate with regulatory or adapter proteins to form a IKK-signalosome holo-complex. The IKK complex associates with TERF2IP/RAP1, leading to promote IKK-mediated phosphorylation of RELA/p65. Part of a complex composed of NCOA2, NCOA3, CHUK/IKKA, IKBKB, IKBKG and CREBBP. Interacts with COPS3, CYLD, NALP2, TRPC4AP and PIDD1. Interacts with ATM; the complex is exported from the nucleus. Interacts with TRAF6. Interacts with IKBKE. Interacts with TANK; the interaction is enhanced by IKBKE and TBK1. Part of a ternary complex consisting of TANK, IKBKB and IKBKG. Interacts with ZFAND5. Interacts with RIPK2. Interacts with TNIP1 and TNFAIP3; TNIP1 facilitates the TNFAIP3-mediated de-ubiquitination of IKBKG. Interacts with TNFAIP3; the interaction is induced by TNF stimulation and by polyubiquitin. Binds (via UBAN region) polyubiquitin; binds both 'Lys-63'-linked and linear polyubiquitin, with higher affinity for linear ubiquitin. Interacts with NLRP10. Interacts with TANK; this interaction increases in response to DNA damage. Interacts with USP10; this interaction increases in response to DNA damage. Interacts with ZC3H12A; this interaction increases in response to DNA damage. Interacts with IFIT5; the interaction synergizes the recruitment of IKK to MAP3K7 and enhances IKK phosphorylation. Interacts with TRIM29; this interaction induces IKBKG/NEMO ubiquitination and proteolytic degradation. Interacts with TRIM13; this interaction leads to IKBKG/NEMO ubiquitination. Interacts with ARFIP2. Interacts with RIPK1. Interacts with (ubiquitinated) BCL10; interaction with polyubiquitinated BCL10 via both 'Lys-63'-linked and linear ubiquitin is required for TCR-induced NF-kappa-B activation. Interacts with MARCHF2; during the late stages of macrophage viral and bacterial infection; the interaction leads to ubiquitination and degradation of IKBKG/NEMO. As to quaternary structure, (Microbial infection) Interacts with Molluscum contagiosum virus protein MC005; this interaction inhibits NF-kappa-B activation. (Microbial infection) Interacts with HTLV-1 Tax oncoprotein; the interaction activates IKBKG. In terms of assembly, (Microbial infection) Interacts with Shigella flexneri ipah9.8; the interaction promotes TNIP1-dependent 'Lys-27'-linked polyubiquitination of IKBKG which perturbs NF-kappa-B activation during bacterial infection. As to quaternary structure, (Microbial infection) Interacts with SARS coronavirus-2/SARS-CoV-2 virus protein ORF9B (via N-terminus); the interaction inhibits polyubiquitination through 'Lys-63' and NF-kappa-B activation. Phosphorylation at Ser-68 attenuates aminoterminal homodimerization. Post-translationally, polyubiquitinated on Lys-285 via 'Lys-63'-linked ubiquitin; the ubiquitination is mediated downstream of NOD2 and RIPK2 and probably plays a role in signaling by facilitating interactions with ubiquitin domain-containing proteins and activates the NF-kappa-B pathway. Polyubiquitinated on Lys-285 and Lys-399 through 'Lys-63'-linked ubiquitin; the ubiquitination is mediated by BCL10, MALT1 and TRAF6 and probably plays a role in signaling by facilitating interactions with ubiquitin domain-containing proteins and activates the NF-kappa-B pathway. Monoubiquitinated on Lys-277 and Lys-309; promotes nuclear export. Polyubiquitinated through 'Lys-27' by TRIM23; involved in antiviral innate and inflammatory responses. Linear polyubiquitinated on Lys-111, Lys-143, Lys-226, Lys-246, Lys-264, Lys-277, Lys-285, Lys-292, Lys-302, Lys-309 and Lys-326; the head-to-tail polyubiquitination is mediated by the LUBAC complex and plays a key role in NF-kappa-B activation. Deubiquitinated by USP10 in a TANK-dependent and -independent manner, leading to the negative regulation of NF-kappa-B signaling upon DNA damage. Ubiquitinated at Lys-326 by MARCHF2 following bacterial and viral infection which leads to its degradation. Polyubiquitinated via 'Lys-29'-linked ubiquitin; leading to lysosomal degradation. In terms of processing, sumoylated on Lys-277 and Lys-309 with SUMO1; the modification results in phosphorylation of Ser-85 by ATM leading to a replacement of the sumoylation by mono-ubiquitination on these residues. Neddylated by TRIM40, resulting in stabilization of NFKBIA and down-regulation of NF-kappa-B activity. Post-translationally, (Microbial infection) Cleaved by hepatitis A virus (HAV) protease 3C allowing the virus to disrupt the host innate immune signaling. In terms of processing, (Microbial infection) Deubiquitinated by Epstein-Barr virus BPLF1 on both 'Lys-48' and 'Lys-63'-linked ubiquitin chains; leading to NF-kappa-B signaling inhibition. (Microbial infection) Polyubiquitinated on Lys-309 and Lys-321 via 'Lys-27'-linked ubiquitin by Shigella flexneri E3 ubiquitin-protein ligase ipah9.8, leading to its degradation by the proteasome. Post-translationally, (Microbial infection) Polyubiquitination through 'Lys-63' is interrupted by interaction with SARS coronavirus-2/SARS-CoV-2 virus protein ORF9B which inhibits the NF-kappa-B pathway. Heart, brain, placenta, lung, liver, skeletal muscle, kidney and pancreas.

It is found in the cytoplasm. The protein resides in the nucleus. Regulatory subunit of the IKK core complex which phosphorylates inhibitors of NF-kappa-B thus leading to the dissociation of the inhibitor/NF-kappa-B complex and ultimately the degradation of the inhibitor. Its binding to scaffolding polyubiquitin plays a key role in IKK activation by multiple signaling receptor pathways. Can recognize and bind both 'Lys-63'-linked and linear polyubiquitin upon cell stimulation, with a much higher affinity for linear polyubiquitin. Could be implicated in NF-kappa-B-mediated protection from cytokine toxicity. Essential for viral activation of IRF3. Involved in TLR3- and IFIH1-mediated antiviral innate response; this function requires 'Lys-27'-linked polyubiquitination. In terms of biological role, (Microbial infection) Also considered to be a mediator for HTLV-1 Tax oncoprotein activation of NF-kappa-B. This chain is NF-kappa-B essential modulator, found in Homo sapiens (Human).